Consider the following 198-residue polypeptide: ATP synthase subunit b (198 aa).

The helical transmembrane segment at 49 to 67 threads the bilayer; sequence IWKWANFLILAGGLGYLVG.

This sequence belongs to the ATPase B chain family. In terms of assembly, F-type ATPases have 2 components, F(1) - the catalytic core - and F(0) - the membrane proton channel. F(1) has five subunits: alpha(3), beta(3), gamma(1), delta(1), epsilon(1). F(0) has three main subunits: a(1), b(2) and c(10-14). The alpha and beta chains form an alternating ring which encloses part of the gamma chain. F(1) is attached to F(0) by a central stalk formed by the gamma and epsilon chains, while a peripheral stalk is formed by the delta and b chains.

The protein resides in the cell inner membrane. Functionally, f(1)F(0) ATP synthase produces ATP from ADP in the presence of a proton or sodium gradient. F-type ATPases consist of two structural domains, F(1) containing the extramembraneous catalytic core and F(0) containing the membrane proton channel, linked together by a central stalk and a peripheral stalk. During catalysis, ATP synthesis in the catalytic domain of F(1) is coupled via a rotary mechanism of the central stalk subunits to proton translocation. Its function is as follows. Component of the F(0) channel, it forms part of the peripheral stalk, linking F(1) to F(0). This is ATP synthase subunit b from Solibacter usitatus (strain Ellin6076).